The sequence spans 161 residues: uncharacterized protein (161 aa).

To R.leguminosarum PsiB.

This is an uncharacterized protein from Sinorhizobium fredii (strain NBRC 101917 / NGR234).